We begin with the raw amino-acid sequence, 488 residues long: Sterol 14-demethylase (488 aa).

A helical membrane pass occupies residues 12 to 32 (TGLVIVATLVIAKLIFSFFTS). Cys433 contributes to the heme binding site.

The protein belongs to the cytochrome P450 family. Heme is required as a cofactor. Expressed in leaves, roots, stems, siliques, flowers, flower buds and seedlings.

The protein localises to the membrane. The catalysed reaction is a 14alpha-methyl steroid + 3 reduced [NADPH--hemoprotein reductase] + 3 O2 = a Delta(14) steroid + formate + 3 oxidized [NADPH--hemoprotein reductase] + 4 H2O + 4 H(+). Its function is as follows. Involved in sterol biosynthesis. Catalyzes the 14-alpha demethylation of obtusifoliol to 4 alpha-methyl-5 alpha-ergosta-8,14,24(28)-trien-3 beta-ol. The protein is Sterol 14-demethylase (CYP51G1) of Arabidopsis thaliana (Mouse-ear cress).